Consider the following 293-residue polypeptide: Pantothenate synthetase (293 aa).

30 to 37 (MGYLHKGH) contributes to the ATP binding site. The active-site Proton donor is the His-37. Position 61 (Gln-61) interacts with (R)-pantoate. Position 61 (Gln-61) interacts with beta-alanine. 147 to 150 (GEKD) contacts ATP. Gln-153 lines the (R)-pantoate pocket. Residues Val-176 and 184 to 187 (CSSR) contribute to the ATP site.

It belongs to the pantothenate synthetase family. Homodimer.

The protein resides in the cytoplasm. It catalyses the reaction (R)-pantoate + beta-alanine + ATP = (R)-pantothenate + AMP + diphosphate + H(+). It functions in the pathway cofactor biosynthesis; (R)-pantothenate biosynthesis; (R)-pantothenate from (R)-pantoate and beta-alanine: step 1/1. Its function is as follows. Catalyzes the condensation of pantoate with beta-alanine in an ATP-dependent reaction via a pantoyl-adenylate intermediate. The polypeptide is Pantothenate synthetase (Brucella melitensis biotype 2 (strain ATCC 23457)).